The primary structure comprises 221 residues: Small ribosomal subunit protein uS5 (221 aa).

A disordered region spans residues 1 to 40; that stretch reads MMAQRNSGAPDNAGGSNDGREGGRGRRDNRDDRRGGRDNA. Over residues 18–40 the composition is skewed to basic and acidic residues; it reads DGREGGRGRRDNRDDRRGGRDNA. The S5 DRBM domain maps to 45–108; it reads YLERVVTINR…DEARKNFFRV (64 aa).

The protein belongs to the universal ribosomal protein uS5 family. Part of the 30S ribosomal subunit. Contacts proteins S4 and S8.

Functionally, with S4 and S12 plays an important role in translational accuracy. Its function is as follows. Located at the back of the 30S subunit body where it stabilizes the conformation of the head with respect to the body. In Mycobacteroides abscessus (strain ATCC 19977 / DSM 44196 / CCUG 20993 / CIP 104536 / JCM 13569 / NCTC 13031 / TMC 1543 / L948) (Mycobacterium abscessus), this protein is Small ribosomal subunit protein uS5.